A 238-amino-acid chain; its full sequence is Demethylmenaquinone methyltransferase (238 aa).

Residues T60, D81, and 108–109 (NA) each bind S-adenosyl-L-methionine.

The protein belongs to the class I-like SAM-binding methyltransferase superfamily. MenG/UbiE family.

The enzyme catalyses a 2-demethylmenaquinol + S-adenosyl-L-methionine = a menaquinol + S-adenosyl-L-homocysteine + H(+). Its pathway is quinol/quinone metabolism; menaquinone biosynthesis; menaquinol from 1,4-dihydroxy-2-naphthoate: step 2/2. Functionally, methyltransferase required for the conversion of demethylmenaquinol (DMKH2) to menaquinol (MKH2). This is Demethylmenaquinone methyltransferase from Oceanobacillus iheyensis (strain DSM 14371 / CIP 107618 / JCM 11309 / KCTC 3954 / HTE831).